We begin with the raw amino-acid sequence, 326 residues long: Protease HtpX homolog (326 aa).

Transmembrane regions (helical) follow at residues 10–30 (LNMALATLGIVLLGFALALAV) and 41–61 (VGLMLSILMFIFFLNIIQWLF). His-147 serves as a coordination point for Zn(2+). Residue Glu-148 is part of the active site. His-151 provides a ligand contact to Zn(2+). A run of 2 helical transmembrane segments spans residues 159–179 (LLMAVGLIPALIYYLGWWIFW) and 197–217 (LLFLIGIAMMAVSFVFQLLVL). Glu-224 is a binding site for Zn(2+).

This sequence belongs to the peptidase M48B family. Zn(2+) serves as cofactor.

Its subcellular location is the cell membrane. The sequence is that of Protease HtpX homolog from Saccharolobus islandicus (strain Y.N.15.51 / Yellowstone #2) (Sulfolobus islandicus).